The primary structure comprises 468 residues: Uronate isomerase (468 aa).

This sequence belongs to the metallo-dependent hydrolases superfamily. Uronate isomerase family.

It carries out the reaction D-glucuronate = D-fructuronate. The enzyme catalyses aldehydo-D-galacturonate = keto-D-tagaturonate. Its pathway is carbohydrate metabolism; pentose and glucuronate interconversion. This Brachyspira hyodysenteriae (strain ATCC 49526 / WA1) protein is Uronate isomerase.